The chain runs to 395 residues: FAD-dependent urate hydroxylase (395 aa).

FAD contacts are provided by residues Gly11, 30–31, Ser43, and Met125; that span reads ER. Residues Asn180, Arg206, and 218 to 220 each bind substrate; that span reads YFF. FAD is bound by residues Asp287 and 297–301; that span reads GQGGC.

Belongs to the FAD-dependent urate hydroxylase family. Monomer. Requires FAD as cofactor.

It carries out the reaction urate + NADH + O2 + H(+) = 5-hydroxyisourate + NAD(+) + H2O. Its pathway is purine metabolism; urate degradation. Catalyzes the hydroxylation of urate to 5-hydroxyisourate (HIU). Is likely to be involved in the urate degradation pathway to allantoin. Prefers NADH over NADPH as the electron donor. This is FAD-dependent urate hydroxylase from Mycolicibacterium vanbaalenii (strain DSM 7251 / JCM 13017 / BCRC 16820 / KCTC 9966 / NRRL B-24157 / PYR-1) (Mycobacterium vanbaalenii).